The chain runs to 212 residues: Large ribosomal subunit protein uL3 (212 aa).

A disordered region spans residues 119 to 146 (YQGNIKRWGQSRGPETHGSRYHRIPGSM).

The protein belongs to the universal ribosomal protein uL3 family. In terms of assembly, part of the 50S ribosomal subunit. Forms a cluster with proteins L14 and L19.

In terms of biological role, one of the primary rRNA binding proteins, it binds directly near the 3'-end of the 23S rRNA, where it nucleates assembly of the 50S subunit. The chain is Large ribosomal subunit protein uL3 from Lactobacillus helveticus (strain DPC 4571).